The following is a 432-amino-acid chain: Glutamate-1-semialdehyde 2,1-aminomutase 1 (432 aa).

The residue at position 268 (Lys268) is an N6-(pyridoxal phosphate)lysine.

It belongs to the class-III pyridoxal-phosphate-dependent aminotransferase family. HemL subfamily. In terms of assembly, homodimer. Pyridoxal 5'-phosphate serves as cofactor.

The protein resides in the cytoplasm. The enzyme catalyses (S)-4-amino-5-oxopentanoate = 5-aminolevulinate. Its pathway is porphyrin-containing compound metabolism; protoporphyrin-IX biosynthesis; 5-aminolevulinate from L-glutamyl-tRNA(Glu): step 2/2. This Bacillus licheniformis (strain ATCC 14580 / DSM 13 / JCM 2505 / CCUG 7422 / NBRC 12200 / NCIMB 9375 / NCTC 10341 / NRRL NRS-1264 / Gibson 46) protein is Glutamate-1-semialdehyde 2,1-aminomutase 1.